The sequence spans 3550 residues: Zinc finger homeobox protein 4 (3550 aa).

M1 carries the post-translational modification N-acetylmethionine. Disordered regions lie at residues 1 to 54 (METC…LKTD), 426 to 479 (HLSS…AYSN), and 521 to 614 (TSSS…IECP). A compositionally biased stretch (polar residues) spans 9–20 (ISRQENGQSTSK). Basic and acidic residues-rich tracts occupy residues 39–54 (EPDR…LKTD) and 433–451 (KMSE…KEST). Positions 467 to 479 (EPGDEDEEDAYSN) are enriched in acidic residues. 2 stretches are compositionally biased toward polar residues: residues 542–553 (GRSNGNVTNSYS) and 566–576 (RDGTTAAPSET). 3 C2H2-type zinc fingers span residues 611–634 (IECP…TMMH), 642–665 (LKCP…KEKH), and 697–721 (FRCE…SDKH). The segment at 739-763 (HSAPTPNTSLSGCGTPSPSKPKQKP) is disordered. A compositionally biased stretch (polar residues) spans 742 to 752 (PTPNTSLSGCG). 4 C2H2-type zinc fingers span residues 765-787 (RRCE…MTSE), 915-939 (YQCK…TDKH), 971-993 (LKCN…TTNH), and 1019-1043 (YYCA…SVKH). The tract at residues 1100–1142 (KAASEEPSEDAGDPLKPPTVAEDDEKEAHKRDNSEGKISTKDP) is disordered. Residues 1125 to 1142 (KEAHKRDNSEGKISTKDP) are compositionally biased toward basic and acidic residues. K1165 is covalently cross-linked (Glycyl lysine isopeptide (Lys-Gly) (interchain with G-Cter in SUMO2)). C2H2-type zinc fingers lie at residues 1188–1211 (YQYP…LSQH) and 1217–1240 (ICCP…THLH). The disordered stretch occupies residues 1271-1339 (APEKSEQDPP…EWNKTSSKDV (69 aa)). Residues 1297 to 1326 (VDDKSMSGLEDSKVGVEIKNEEQKPAKEPV) show a composition bias toward basic and acidic residues. K1315 participates in a covalent cross-link: Glycyl lysine isopeptide (Lys-Gly) (interchain with G-Cter in SUMO2). 2 consecutive C2H2-type zinc fingers follow at residues 1368–1390 (YRCN…SQYH) and 1396–1419 (TMCT…EAGH). The segment at 1467–1492 (EGKASPVESDGSSIPDDLGLEPKRTL) is disordered. The C2H2-type 12 zinc-finger motif lies at 1512-1538 (YKCTVCKESFTQKNILLVHYNSVSHLH). K1562 participates in a covalent cross-link: Glycyl lysine isopeptide (Lys-Gly) (interchain with G-Cter in SUMO2). The C2H2-type 13 zinc finger occupies 1564–1588 (YKCSTCSVAYSQSSTLEIHMRSVLH). The disordered stretch occupies residues 1779–1873 (PQLQPQNQQP…CIPPPRIASG (95 aa)). Positions 1792-1808 (QQQQPQQQPSKLLKQEQ) are enriched in low complexity. A Glycyl lysine isopeptide (Lys-Gly) (interchain with G-Cter in SUMO2) cross-link involves residue K1805. Over residues 1823 to 1860 (PSYKEAEEVTEKQEKPKQEFINDTEGLKDSKDIKKQKS) the composition is skewed to basic and acidic residues. The C2H2-type 14 zinc finger occupies 1916–1939 (LECGICGKLFSNVLILKSHQEHVH). Positions 1984-2006 (KIPNTVSAPLQAPPPTPPSAPQQ) are disordered. Residues 1994-2003 (QAPPPTPPSA) show a composition bias toward pro residues. DNA-binding regions (homeobox) lie at residues 2069–2128 (FKRP…RQRN) and 2166–2225 (KRSS…RKSY). A C2H2-type 15; degenerate zinc finger spans residues 2252–2276 (YQCKKCNVVFPRIFDLITHQKKQCY). Over residues 2318-2331 (TLVASSGSGTSTPL) the composition is skewed to polar residues. Residues 2318-2412 (TLVASSGSGT…SQTPIPSSPL (95 aa)) are disordered. Over residues 2337-2355 (PEPEKNSPKTEYPGEKTKQ) the composition is skewed to basic and acidic residues. Residues 2356 to 2376 (SDPSLPQGTKSAPSSVLTSSE) show a composition bias toward polar residues. Positions 2383-2392 (PQPPTQPPKQ) are enriched in pro residues. Residues 2401-2412 (SASQTPIPSSPL) show a composition bias toward polar residues. The C2H2-type 16 zinc-finger motif lies at 2430-2452 (YPCDQCTLAFPTLELWKEHQHMH). The segment covering 2490-2508 (GSSLTQMPPQTSTAHTTAP) has biased composition (polar residues). A disordered region spans residues 2490 to 2545 (GSSLTQMPPQTSTAHTTAPASVAASLKRKLEDKEDNNCSEKEGGNSGEDQHRDKRL). Over residues 2517-2541 (RKLEDKEDNNCSEKEGGNSGEDQHR) the composition is skewed to basic and acidic residues. Positions 2542–2601 (DKRLRTTITPEQLEILYEKYLLDSNPTRKMLDHIAREVGLKKRVVQVWFQNTRARERKGQ) form a DNA-binding region, homeobox 3. Residues 2612–2635 (KRCPFCRALFKAKSALESHIRSRH) form a C2H2-type 17 zinc finger. Residue S2645 is modified to Phosphoserine. Disordered regions lie at residues 2746-2791 (AISD…ATTP) and 2810-2866 (HFND…PGHK). Over residues 2781 to 2791 (LDSLQKPATTP) the composition is skewed to polar residues. Over residues 2811–2820 (FNDKDGDHDQ) the composition is skewed to basic and acidic residues. Residues 2843-2855 (PSSPNPFGSSNPF) are compositionally biased toward low complexity. Positions 2865 to 2924 (HKRFRTQMSNLQLKVLKACFSDYRTPTMQECEMLGNEIGLPKRVVQVWFQNARAKERKFK) form a DNA-binding region, homeobox 4. The C2H2-type 18 zinc finger occupies 2943–2967 (PECTLCGVKYSARLSIRDHIFSKQH). Disordered regions lie at residues 3051–3156 (PSSL…EEKI) and 3261–3318 (QDSL…VQLD). The span at 3058 to 3068 (PQNSNTLTSPG) shows a compositional bias: polar residues. The span at 3075 to 3088 (PSSATSSPALSLSS) shows a compositional bias: low complexity. Pro residues predominate over residues 3097-3109 (TPPPPPPPPPPPS). Over residues 3136 to 3156 (IKEEESEAIKPEKHPKKEEKI) the composition is skewed to basic and acidic residues. A Glycyl lysine isopeptide (Lys-Gly) (interchain with G-Cter in SUMO2) cross-link involves residue K3137. Residues 3248–3277 (ALLQQYQQYQQSLQDSLQKQQKQQQEQQQK) are a coiled coil. Residues 3261–3276 (QDSLQKQQKQQQEQQQ) show a composition bias toward low complexity. The segment covering 3298–3318 (SETKEEKSTAPESTKEEVQLD) has biased composition (basic and acidic residues). The C2H2-type 19; degenerate zinc finger occupies 3337–3361 (FVCRKCQMMFTDEDATVNHQKSFCY). The segment at 3381–3405 (YQCLACDLALSGNEALSQHLQSSLH) adopts a C2H2-type 20 zinc-finger fold. The disordered stretch occupies residues 3424–3445 (LPHSVCSPPPNTSSTSPSAASS). Over residues 3435–3445 (TSSTSPSAASS) the composition is skewed to low complexity.

Belongs to the krueppel C2H2-type zinc-finger protein family. As to expression, expressed in brain, heart, lung, muscle and small intestine. No expression detected in undifferentiated P19 cells, however, expression was seen following retinoic acid treatment to induce neuronal differentiation. Expressed in undifferentiated C2C12 cells, following induction of muscle differentiation in a low-serum medium, expression levels were decreased.

The protein resides in the nucleus. Functionally, may play a role in neural and muscle differentiation. May be involved in transcriptional regulation. This Mus musculus (Mouse) protein is Zinc finger homeobox protein 4 (Zfhx4).